Reading from the N-terminus, the 300-residue chain is Energy-coupling factor transporter ATP-binding protein EcfA2 (300 aa).

The ABC transporter domain occupies 3-258 (IKAKNIVKIY…NKFLIENKML (256 aa)). 40 to 47 (GQTGSGKT) is a binding site for ATP.

This sequence belongs to the ABC transporter superfamily. Energy-coupling factor EcfA family. In terms of assembly, forms a stable energy-coupling factor (ECF) transporter complex composed of 2 membrane-embedded substrate-binding proteins (S component), 2 ATP-binding proteins (A component) and 2 transmembrane proteins (T component).

The protein localises to the cell membrane. Its function is as follows. ATP-binding (A) component of a common energy-coupling factor (ECF) ABC-transporter complex. Unlike classic ABC transporters this ECF transporter provides the energy necessary to transport a number of different substrates. The polypeptide is Energy-coupling factor transporter ATP-binding protein EcfA2 (Mesomycoplasma hyopneumoniae (strain 7448) (Mycoplasma hyopneumoniae)).